A 176-amino-acid chain; its full sequence is Disulfide bond formation protein B (176 aa).

Residues 1 to 14 (MLQFLNRCSKGRGA) lie on the Cytoplasmic side of the membrane. Residues 15 to 31 (WLLMALTALVLELVALY) form a helical membrane-spanning segment. Over 32 to 49 (FQHVMLLQPCVMCIYERA) the chain is Periplasmic. The cysteines at positions 41 and 44 are disulfide-linked. Residues 50–65 (ALFGILGASLLGAIAP) traverse the membrane as a helical segment. At 66–71 (KSPLRY) the chain is on the cytoplasmic side. The helical transmembrane segment at 72–89 (LAIFIWIYSAWKGVQLAW) threads the bilayer. The Periplasmic portion of the chain corresponds to 90–144 (THTMLQLHPSPFTTCDFFVSFPSWLPLDKWFPAVFVASGDCAVKQWEFLSLEMPQ). Cysteine 104 and cysteine 130 are oxidised to a cystine. Residues 145 to 163 (WLVGIFAAYLFIAILVLIS) form a helical membrane-spanning segment. At 164–176 (QFVKPKRRDLFSR) the chain is on the cytoplasmic side.

This sequence belongs to the DsbB family.

Its subcellular location is the cell inner membrane. Functionally, required for disulfide bond formation in some periplasmic proteins. Acts by oxidizing the DsbA protein. This is Disulfide bond formation protein B from Yersinia enterocolitica serotype O:8 / biotype 1B (strain NCTC 13174 / 8081).